We begin with the raw amino-acid sequence, 734 residues long: Casein kinase II subunit alpha'-interacting protein (734 aa).

The segment at 608-654 (SLLPSTSSSTSSSSTTSSSSSVASASSDSSSSSSSSSSFSISSSSSP) is disordered. The segment covering 612–654 (STSSSTSSSSTTSSSSSVASASSDSSSSSSSSSSFSISSSSSP) has biased composition (low complexity).

As to quaternary structure, interacts (via C-terminus) with CSNK2A2. In terms of processing, phosphorylated by CK2 (casein kinase II), specifically by complexes containing catalytic subunit CSNK2A2.

Its subcellular location is the nucleus. Functionally, may play a role in chromatin regulation of male germ cells. The sequence is that of Casein kinase II subunit alpha'-interacting protein from Homo sapiens (Human).